A 123-amino-acid polypeptide reads, in one-letter code: Guanine nucleotide exchange factor MSS4 (123 aa).

Methionine 1 carries the N-acetylmethionine modification. Residues 9-123 (ELVSAEGRNR…YVALERVSHE (115 aa)) form the MSS4 domain. Zn(2+) is bound by residues cysteine 23, cysteine 26, cysteine 94, and cysteine 97.

The protein belongs to the DSS4/MSS4 family. In terms of assembly, interacts with RAB8A.

Its function is as follows. Guanine-nucleotide-releasing protein that acts on members of the SEC4/YPT1/RAB subfamily. Stimulates GDP release from both YPT1, RAB3A and RAB10, but is less active on these proteins than on the SEC4 protein. Might play a general role in vesicular transport. This chain is Guanine nucleotide exchange factor MSS4, found in Mus musculus (Mouse).